The sequence spans 119 residues: Large ribosomal subunit protein eL31 (119 aa).

This sequence belongs to the eukaryotic ribosomal protein eL31 family.

The chain is Large ribosomal subunit protein eL31 (RPL31) from Cyanophora paradoxa.